The sequence spans 219 residues: Thiamine-phosphate synthase (219 aa).

Residues 44–48 (QFREK) and Asn79 contribute to the 4-amino-2-methyl-5-(diphosphooxymethyl)pyrimidine site. Mg(2+)-binding residues include Asp80 and Asp99. Ser117 contacts 4-amino-2-methyl-5-(diphosphooxymethyl)pyrimidine. 143 to 145 (TST) lines the 2-[(2R,5Z)-2-carboxy-4-methylthiazol-5(2H)-ylidene]ethyl phosphate pocket. Lys146 serves as a coordination point for 4-amino-2-methyl-5-(diphosphooxymethyl)pyrimidine. Residues Gly175 and 195-196 (IS) each bind 2-[(2R,5Z)-2-carboxy-4-methylthiazol-5(2H)-ylidene]ethyl phosphate.

This sequence belongs to the thiamine-phosphate synthase family. The cofactor is Mg(2+).

It carries out the reaction 2-[(2R,5Z)-2-carboxy-4-methylthiazol-5(2H)-ylidene]ethyl phosphate + 4-amino-2-methyl-5-(diphosphooxymethyl)pyrimidine + 2 H(+) = thiamine phosphate + CO2 + diphosphate. It catalyses the reaction 2-(2-carboxy-4-methylthiazol-5-yl)ethyl phosphate + 4-amino-2-methyl-5-(diphosphooxymethyl)pyrimidine + 2 H(+) = thiamine phosphate + CO2 + diphosphate. The catalysed reaction is 4-methyl-5-(2-phosphooxyethyl)-thiazole + 4-amino-2-methyl-5-(diphosphooxymethyl)pyrimidine + H(+) = thiamine phosphate + diphosphate. The protein operates within cofactor biosynthesis; thiamine diphosphate biosynthesis; thiamine phosphate from 4-amino-2-methyl-5-diphosphomethylpyrimidine and 4-methyl-5-(2-phosphoethyl)-thiazole: step 1/1. In terms of biological role, condenses 4-methyl-5-(beta-hydroxyethyl)thiazole monophosphate (THZ-P) and 2-methyl-4-amino-5-hydroxymethyl pyrimidine pyrophosphate (HMP-PP) to form thiamine monophosphate (TMP). This is Thiamine-phosphate synthase from Bacillus cereus (strain AH820).